A 247-amino-acid polypeptide reads, in one-letter code: Exosome complex component Rrp4 (247 aa).

The S1 motif domain maps to 70-143 (GDTVIGLIED…INPILSIKGK (74 aa)). Residues 149–211 (SSGIVIDIPP…EALVEAIQII (63 aa)) enclose the KH domain.

It belongs to the RRP4 family. As to quaternary structure, component of the archaeal exosome complex. Forms a trimer of Rrp4 and/or Csl4 subunits. The trimer associates with a hexameric ring-like arrangement composed of 3 Rrp41-Rrp42 heterodimers.

Its subcellular location is the cytoplasm. Functionally, non-catalytic component of the exosome, which is a complex involved in RNA degradation. Increases the RNA binding and the efficiency of RNA degradation. Confers strong poly(A) specificity to the exosome. In Sulfurisphaera tokodaii (strain DSM 16993 / JCM 10545 / NBRC 100140 / 7) (Sulfolobus tokodaii), this protein is Exosome complex component Rrp4.